Here is a 184-residue protein sequence, read N- to C-terminus: Large ribosomal subunit protein uL5 (184 aa).

Belongs to the universal ribosomal protein uL5 family. As to quaternary structure, part of the 50S ribosomal subunit; part of the 5S rRNA/L5/L18/L25 subcomplex. Contacts the 5S rRNA and the P site tRNA. Forms a bridge to the 30S subunit in the 70S ribosome.

Its function is as follows. This is one of the proteins that bind and probably mediate the attachment of the 5S RNA into the large ribosomal subunit, where it forms part of the central protuberance. In the 70S ribosome it contacts protein S13 of the 30S subunit (bridge B1b), connecting the 2 subunits; this bridge is implicated in subunit movement. Contacts the P site tRNA; the 5S rRNA and some of its associated proteins might help stabilize positioning of ribosome-bound tRNAs. The chain is Large ribosomal subunit protein uL5 from Thermotoga maritima (strain ATCC 43589 / DSM 3109 / JCM 10099 / NBRC 100826 / MSB8).